A 100-amino-acid polypeptide reads, in one-letter code: Urease subunit gamma (100 aa).

It belongs to the urease gamma subunit family. In terms of assembly, heterotrimer of UreA (gamma), UreB (beta) and UreC (alpha) subunits. Three heterotrimers associate to form the active enzyme.

The protein resides in the cytoplasm. It carries out the reaction urea + 2 H2O + H(+) = hydrogencarbonate + 2 NH4(+). Its pathway is nitrogen metabolism; urea degradation; CO(2) and NH(3) from urea (urease route): step 1/1. This is Urease subunit gamma from Lachnoclostridium phytofermentans (strain ATCC 700394 / DSM 18823 / ISDg) (Clostridium phytofermentans).